The chain runs to 422 residues: MSEFNFISRLHNRGLISHITNEDNLSKLIENKSISLYCGFDPTEESLHIGHLLPLIMLKRFQIAGHRPIILIGGATSLIGDPSFKEKERVFNSNYNVNIWTEKITKQISCFLDFNCGKNSAVLLNNNTWFKQINILSFLRDVGKYFSVNTMINRAAVKQRITRPDQGISFTEFSYNLLQAYDFFILNQQYQVDLQIGGADQWGNISSGMHLIHRKTKRVVYGLTVPLLIQSNGIKFGKTESGTVWLDSNKTSPYKFYQFWMNIEDANVYYFLKLFTFIKVSEINKLEKNKNINNQIINDKSLLAKHITQLVHGKEKLLAAERITKFLFLKNTTHIEESDLQQLKQDGIPFIEVSNVKDLQEALVLTSLAQSRTQAKNMIISNSISINTEKIRKNHIFHEKDKLFGKFTLLSRGKKQHSLLCW.

Tyr37 is an L-tyrosine binding site. The short motif at 42–51 (PTEESLHIGH) is the 'HIGH' region element. Positions 175 and 179 each coordinate L-tyrosine. A 'KMSKS' region motif is present at residues 235–239 (KFGKT). Lys238 contacts ATP. Residues 357 to 414 (KDLQEALVLTSLAQSRTQAKNMIISNSISINTEKIRKNHIFHEKDKLFGKFTLLSRGK) enclose the S4 RNA-binding domain.

Belongs to the class-I aminoacyl-tRNA synthetase family. TyrS type 1 subfamily. In terms of assembly, homodimer.

It is found in the cytoplasm. The catalysed reaction is tRNA(Tyr) + L-tyrosine + ATP = L-tyrosyl-tRNA(Tyr) + AMP + diphosphate + H(+). Functionally, catalyzes the attachment of tyrosine to tRNA(Tyr) in a two-step reaction: tyrosine is first activated by ATP to form Tyr-AMP and then transferred to the acceptor end of tRNA(Tyr). The protein is Tyrosine--tRNA ligase of Buchnera aphidicola subsp. Acyrthosiphon pisum (strain Tuc7).